A 340-amino-acid chain; its full sequence is Phosphoribosylformylglycinamidine cyclo-ligase (340 aa).

Belongs to the AIR synthase family.

The protein resides in the cytoplasm. It carries out the reaction 2-formamido-N(1)-(5-O-phospho-beta-D-ribosyl)acetamidine + ATP = 5-amino-1-(5-phospho-beta-D-ribosyl)imidazole + ADP + phosphate + H(+). The protein operates within purine metabolism; IMP biosynthesis via de novo pathway; 5-amino-1-(5-phospho-D-ribosyl)imidazole from N(2)-formyl-N(1)-(5-phospho-D-ribosyl)glycinamide: step 2/2. The polypeptide is Phosphoribosylformylglycinamidine cyclo-ligase (Streptococcus agalactiae serotype Ia (strain ATCC 27591 / A909 / CDC SS700)).